The sequence spans 448 residues: Putative diacyglycerol O-acyltransferase MT3848 (448 aa).

The Proton acceptor role is filled by H136.

The protein belongs to the long-chain O-acyltransferase family.

It carries out the reaction an acyl-CoA + a 1,2-diacyl-sn-glycerol = a triacyl-sn-glycerol + CoA. It functions in the pathway glycerolipid metabolism; triacylglycerol biosynthesis. In Mycobacterium tuberculosis (strain CDC 1551 / Oshkosh), this protein is Putative diacyglycerol O-acyltransferase MT3848.